Consider the following 122-residue polypeptide: Large ribosomal subunit protein uL22c (122 aa).

Belongs to the universal ribosomal protein uL22 family. In terms of assembly, part of the 50S ribosomal subunit.

Its subcellular location is the plastid. The protein localises to the chloroplast. In terms of biological role, this protein binds specifically to 23S rRNA. The globular domain of the protein is located near the polypeptide exit tunnel on the outside of the subunit, while an extended beta-hairpin is found that lines the wall of the exit tunnel in the center of the 70S ribosome. The sequence is that of Large ribosomal subunit protein uL22c (rpl22) from Adiantum capillus-veneris (Maidenhair fern).